Reading from the N-terminus, the 542-residue chain is CTP synthase (542 aa).

Positions 1-266 (MATNYIFVTG…DDLICQRFRL (266 aa)) are amidoligase domain. Residue Ser14 participates in CTP binding. Ser14 serves as a coordination point for UTP. ATP-binding positions include 15 to 20 (SLGKGI) and Asp72. Positions 72 and 140 each coordinate Mg(2+). Residues 147–149 (DIE), 187–192 (KTKPTQ), and Lys223 each bind CTP. Residues 187 to 192 (KTKPTQ) and Lys223 each bind UTP. 239-241 (KDV) is an ATP binding site. A Glutamine amidotransferase type-1 domain is found at 291 to 542 (TIGMVGKYVE…VKAAKENQKK (252 aa)). Residue Gly352 coordinates L-glutamine. Cys379 functions as the Nucleophile; for glutamine hydrolysis in the catalytic mechanism. Residues 380–383 (LGMQ), Glu403, and Arg470 contribute to the L-glutamine site. Residues His515 and Glu517 contribute to the active site.

The protein belongs to the CTP synthase family. In terms of assembly, homotetramer.

It carries out the reaction UTP + L-glutamine + ATP + H2O = CTP + L-glutamate + ADP + phosphate + 2 H(+). The catalysed reaction is L-glutamine + H2O = L-glutamate + NH4(+). It catalyses the reaction UTP + NH4(+) + ATP = CTP + ADP + phosphate + 2 H(+). It participates in pyrimidine metabolism; CTP biosynthesis via de novo pathway; CTP from UDP: step 2/2. Allosterically activated by GTP, when glutamine is the substrate; GTP has no effect on the reaction when ammonia is the substrate. The allosteric effector GTP functions by stabilizing the protein conformation that binds the tetrahedral intermediate(s) formed during glutamine hydrolysis. Inhibited by the product CTP, via allosteric rather than competitive inhibition. In terms of biological role, catalyzes the ATP-dependent amination of UTP to CTP with either L-glutamine or ammonia as the source of nitrogen. Regulates intracellular CTP levels through interactions with the four ribonucleotide triphosphates. The polypeptide is CTP synthase (Mannheimia succiniciproducens (strain KCTC 0769BP / MBEL55E)).